The primary structure comprises 231 residues: Small ribosomal subunit protein uS3 (231 aa).

Positions I38 to K106 constitute a KH type-2 domain.

It belongs to the universal ribosomal protein uS3 family. As to quaternary structure, part of the 30S ribosomal subunit. Forms a tight complex with proteins S10 and S14.

In terms of biological role, binds the lower part of the 30S subunit head. Binds mRNA in the 70S ribosome, positioning it for translation. The sequence is that of Small ribosomal subunit protein uS3 from Endomicrobium trichonymphae.